The primary structure comprises 145 residues: Male-specific protein scotti (145 aa).

The interval 1–34 is disordered; that stretch reads MANNRLMPEGQIIEEDMDGEDQNARELDIDDDDD. Residues 12–21 are compositionally biased toward acidic residues; it reads IIEEDMDGED.

This sequence belongs to the male-specific scotti family.

In terms of biological role, post-meiotically transcribed gene that has a role in late spermiogenesis; required for actin cone progression during spermatid individualization. This Drosophila willistoni (Fruit fly) protein is Male-specific protein scotti.